The chain runs to 327 residues: PDZ and LIM domain protein 1 (327 aa).

Threonine 2 bears the N-acetylthreonine mark. One can recognise a PDZ domain in the interval 3–85 (TQQIVLQGPG…NMTLTVSRSE (83 aa)). Phosphoserine is present on residues serine 90 and serine 130. Tyrosine 142 is subject to Phosphotyrosine. Positions 161 to 186 (VESKTSASGEEANSRPSAQPHPSGGL) are disordered. The 60-residue stretch at 256-315 (PICDKCGTGIVGVFVKLRDHHRHPECYVCTDCGINLKQKGHFFVGDQIYCEKHARERVTP) folds into the LIM zinc-binding domain. Zn(2+) contacts are provided by cysteine 258, cysteine 261, histidine 278, cysteine 281, cysteine 284, cysteine 287, cysteine 305, and histidine 308. Threonine 314 is modified (phosphothreonine). Tyrosine 319 bears the Phosphotyrosine mark.

In terms of assembly, interacts with ACTN1. Interacts with ACTN2 and ACTN4. Interacts with PDLIM4. In terms of tissue distribution, expressed most abundantly in heart, lung and liver, moderately in spleen and skeletal muscle, and at extremely low levels (if at all) in testis and brain tissues.

It is found in the cytoplasm. Its subcellular location is the cytoskeleton. The protein localises to the myofibril. The protein resides in the sarcomere. It localises to the z line. Its function is as follows. Cytoskeletal protein that may act as an adapter that brings other proteins (like kinases) to the cytoskeleton. Involved in assembly, disassembly and directioning of stress fibers in fibroblasts. Required for the localization of ACTN1 and PALLD to stress fibers. Required for cell migration and in maintaining cell polarity of fibroblasts. The polypeptide is PDZ and LIM domain protein 1 (Pdlim1) (Rattus norvegicus (Rat)).